The chain runs to 221 residues: Adenylate kinase (221 aa).

Gly10–Thr15 provides a ligand contact to ATP. Positions Ser30–Val59 are NMP. AMP contacts are provided by residues Thr31, Arg36, Glu57–Val59, Gly85–Arg88, and Gln92. The interval Gly122 to Asp159 is LID. Residues Arg123 and Thr132–Tyr133 each bind ATP. AMP contacts are provided by Arg156 and Arg167. ATP is bound at residue Gly207.

It belongs to the adenylate kinase family. Monomer.

The protein localises to the cytoplasm. It carries out the reaction AMP + ATP = 2 ADP. It participates in purine metabolism; AMP biosynthesis via salvage pathway; AMP from ADP: step 1/1. Functionally, catalyzes the reversible transfer of the terminal phosphate group between ATP and AMP. Plays an important role in cellular energy homeostasis and in adenine nucleotide metabolism. This chain is Adenylate kinase, found in Paraburkholderia phymatum (strain DSM 17167 / CIP 108236 / LMG 21445 / STM815) (Burkholderia phymatum).